A 105-amino-acid chain; its full sequence is Protein LITTLE ZIPPER 2 (105 aa).

The segment at 1–20 (MCLTTSEPPFPDTDTPTMRS) is disordered. A coiled-coil region spans residues 39-60 (NLTRRRRLLKEQKEMEMRNLKL).

In terms of assembly, interacts with REV.

Its function is as follows. Competitive inhibitor of the HD-ZIPIII transcription factors in shoot apical meristem (SAM) development. Acts by forming non-functional heterodimers. Part of a negative feedback loop. Essential for proper functioning of stem cells in the SAM. The chain is Protein LITTLE ZIPPER 2 from Arabidopsis thaliana (Mouse-ear cress).